A 264-amino-acid polypeptide reads, in one-letter code: Glutamate racemase (264 aa).

Substrate is bound by residues aspartate 12–serine 13 and tyrosine 44–glycine 45. Cysteine 76 functions as the Proton donor/acceptor in the catalytic mechanism. A substrate-binding site is contributed by asparagine 77 to threonine 78. Cysteine 186 acts as the Proton donor/acceptor in catalysis. Threonine 187–histidine 188 serves as a coordination point for substrate.

Belongs to the aspartate/glutamate racemases family.

It carries out the reaction L-glutamate = D-glutamate. Its pathway is cell wall biogenesis; peptidoglycan biosynthesis. Provides the (R)-glutamate required for cell wall biosynthesis. In Fusobacterium nucleatum subsp. nucleatum (strain ATCC 25586 / DSM 15643 / BCRC 10681 / CIP 101130 / JCM 8532 / KCTC 2640 / LMG 13131 / VPI 4355), this protein is Glutamate racemase.